The sequence spans 560 residues: Formate--tetrahydrofolate ligase (560 aa).

69–76 (TPAGEGKS) contacts ATP.

Belongs to the formate--tetrahydrofolate ligase family.

The enzyme catalyses (6S)-5,6,7,8-tetrahydrofolate + formate + ATP = (6R)-10-formyltetrahydrofolate + ADP + phosphate. It participates in one-carbon metabolism; tetrahydrofolate interconversion. The polypeptide is Formate--tetrahydrofolate ligase (Listeria welshimeri serovar 6b (strain ATCC 35897 / DSM 20650 / CCUG 15529 / CIP 8149 / NCTC 11857 / SLCC 5334 / V8)).